Here is a 427-residue protein sequence, read N- to C-terminus: G2/mitotic-specific cyclin-3 (427 aa).

Residues 1–12 (MHHNSQSLSSGH) show a composition bias toward polar residues. 2 disordered regions span residues 1-29 (MHHNSQSLSSGHIRSPEDENVAPIGNLKH) and 89-126 (SVAQRKEADHNDLLTDREQEEPVEDDGESEEDEEEDQE). A compositionally biased stretch (basic and acidic residues) spans 89-105 (SVAQRKEADHNDLLTDR). Acidic residues predominate over residues 106–126 (EQEEPVEDDGESEEDEEEDQE).

This sequence belongs to the cyclin family. Cyclin AB subfamily.

In terms of biological role, essential for the control of the cell cycle at the G2/M (mitosis) transition. Interacts with the CDC2 protein kinase to form MPF. G2/M cyclins accumulate steadily during G2 and are abruptly destroyed at mitosis. The sequence is that of G2/mitotic-specific cyclin-3 (CLB3) from Saccharomyces cerevisiae (strain ATCC 204508 / S288c) (Baker's yeast).